Here is a 426-residue protein sequence, read N- to C-terminus: Glutamate-1-semialdehyde 2,1-aminomutase (426 aa).

Lysine 265 is subject to N6-(pyridoxal phosphate)lysine.

The protein belongs to the class-III pyridoxal-phosphate-dependent aminotransferase family. HemL subfamily. In terms of assembly, homodimer. It depends on pyridoxal 5'-phosphate as a cofactor.

The protein resides in the cytoplasm. The catalysed reaction is (S)-4-amino-5-oxopentanoate = 5-aminolevulinate. The protein operates within porphyrin-containing compound metabolism; protoporphyrin-IX biosynthesis; 5-aminolevulinate from L-glutamyl-tRNA(Glu): step 2/2. The polypeptide is Glutamate-1-semialdehyde 2,1-aminomutase (Escherichia fergusonii (strain ATCC 35469 / DSM 13698 / CCUG 18766 / IAM 14443 / JCM 21226 / LMG 7866 / NBRC 102419 / NCTC 12128 / CDC 0568-73)).